A 199-amino-acid polypeptide reads, in one-letter code: Putative acetyltransferase SAV2555 (199 aa).

This sequence belongs to the transferase hexapeptide repeat family.

The polypeptide is Putative acetyltransferase SAV2555 (Staphylococcus aureus (strain Mu50 / ATCC 700699)).